The chain runs to 185 residues: MTTVTAQQQAELIKNSIKSIPDYPKPGILFRDVTSLLEDPVAYAASIDMLANRYRNTGVTKVVGTEARGFLFGAPVALALGVGFVPVRKPGKLPRPTISESYELEYGSDTLEIHADAISAGDNVLVIDDLLATGGTLEATVKLIRRLGGTVNDAAFIINLFDLGGEQRLTEMGVTCYSLVDFPGH.

It belongs to the purine/pyrimidine phosphoribosyltransferase family. Homodimer.

The protein resides in the cytoplasm. The catalysed reaction is AMP + diphosphate = 5-phospho-alpha-D-ribose 1-diphosphate + adenine. Its pathway is purine metabolism; AMP biosynthesis via salvage pathway; AMP from adenine: step 1/1. Catalyzes a salvage reaction resulting in the formation of AMP, that is energically less costly than de novo synthesis. This is Adenine phosphoribosyltransferase from Pectobacterium atrosepticum (strain SCRI 1043 / ATCC BAA-672) (Erwinia carotovora subsp. atroseptica).